Reading from the N-terminus, the 164-residue chain is MSLSKLKAPKGANRERTRVGRGQGSGLGKTAGRGGKGQKARSGNMHFEGFEGGQMPLQRRLPKFGFKNVFRREFEEVKVGDLDGLSGVVDPAALKGAGLVRGNRDGVVVLGGGELKSAVTVKVHRVTAGARAAIEKAGGTVELIPAPVTMYEKAKAARKAQAKK.

Residues 1–52 are disordered; that stretch reads MSLSKLKAPKGANRERTRVGRGQGSGLGKTAGRGGKGQKARSGNMHFEGFEG. A compositionally biased stretch (gly residues) spans 21–37; sequence RGQGSGLGKTAGRGGKG.

It belongs to the universal ribosomal protein uL15 family. In terms of assembly, part of the 50S ribosomal subunit.

Functionally, binds to the 23S rRNA. In Anaeromyxobacter sp. (strain Fw109-5), this protein is Large ribosomal subunit protein uL15.